We begin with the raw amino-acid sequence, 304 residues long: 33 kDa chaperonin (304 aa).

2 disulfides stabilise this stretch: cysteine 236–cysteine 238 and cysteine 269–cysteine 272.

This sequence belongs to the HSP33 family. In terms of processing, under oxidizing conditions two disulfide bonds are formed involving the reactive cysteines. Under reducing conditions zinc is bound to the reactive cysteines and the protein is inactive.

The protein resides in the cytoplasm. Redox regulated molecular chaperone. Protects both thermally unfolding and oxidatively damaged proteins from irreversible aggregation. Plays an important role in the bacterial defense system toward oxidative stress. The sequence is that of 33 kDa chaperonin from Pelobacter propionicus (strain DSM 2379 / NBRC 103807 / OttBd1).